The sequence spans 281 residues: NADPH-dependent 7-cyano-7-deazaguanine reductase (281 aa).

81-83 (IES) serves as a coordination point for substrate. An NADPH-binding site is contributed by 83–84 (SK). Cys-188 serves as the catalytic Thioimide intermediate. Asp-195 (proton donor) is an active-site residue. 227–228 (HE) serves as a coordination point for substrate. 256–257 (RG) serves as a coordination point for NADPH.

This sequence belongs to the GTP cyclohydrolase I family. QueF type 2 subfamily. In terms of assembly, homodimer.

Its subcellular location is the cytoplasm. The catalysed reaction is 7-aminomethyl-7-carbaguanine + 2 NADP(+) = 7-cyano-7-deazaguanine + 2 NADPH + 3 H(+). Its pathway is tRNA modification; tRNA-queuosine biosynthesis. Catalyzes the NADPH-dependent reduction of 7-cyano-7-deazaguanine (preQ0) to 7-aminomethyl-7-deazaguanine (preQ1). This chain is NADPH-dependent 7-cyano-7-deazaguanine reductase, found in Polaromonas naphthalenivorans (strain CJ2).